Consider the following 233-residue polypeptide: MNKILLQCDNLCKRYQEGTVQTDVLHDISFSIGEGEMMAIVGSSGSGKSTLLHLLGGLDTPTSGDVIFSGQPMSKLSSAAKAELRNQKLGFIYQFHHLLPDFTALENVAMPLLIGKKKPAEIDARAREMLHAVGLEHRATHRPSELSGGERQRVAIARALVNNPRLVLADEPTGNLDARNADSIFELLGELNRLQGTAFLVVTHDLQLAKRMSRQLEMRDGRLTAELSLMGAE.

In terms of domain architecture, ABC transporter spans 6 to 233 (LQCDNLCKRY…TAELSLMGAE (228 aa)). ATP is bound at residue 42-49 (GSSGSGKS).

This sequence belongs to the ABC transporter superfamily. Lipoprotein translocase (TC 3.A.1.125) family. In terms of assembly, the complex is composed of two ATP-binding proteins (LolD) and two transmembrane proteins (LolC and LolE).

The protein localises to the cell inner membrane. In terms of biological role, part of the ABC transporter complex LolCDE involved in the translocation of mature outer membrane-directed lipoproteins, from the inner membrane to the periplasmic chaperone, LolA. Responsible for the formation of the LolA-lipoprotein complex in an ATP-dependent manner. The chain is Lipoprotein-releasing system ATP-binding protein LolD from Salmonella choleraesuis (strain SC-B67).